The sequence spans 232 residues: U2 small nuclear ribonucleoprotein B'' (232 aa).

The RRM 1 domain maps to glutamine 10 to alanine 89. Residues threonine 100 to asparagine 157 are disordered. A compositionally biased stretch (basic and acidic residues) spans arginine 108–glutamine 122. Composition is skewed to polar residues over residues arginine 123–asparagine 139 and phenylalanine 146–proline 156. An RRM 2 domain is found at asparagine 158–lysine 232.

The protein belongs to the RRM U1 A/B'' family. Component of the spliceosome where it is associated with snRNP U2.

Its subcellular location is the nucleus. It is found in the cajal body. The protein localises to the nucleoplasm. It localises to the cytoplasm. Its function is as follows. Involved in nuclear pre-mRNA splicing. The protein is U2 small nuclear ribonucleoprotein B'' (U2B'') of Arabidopsis thaliana (Mouse-ear cress).